We begin with the raw amino-acid sequence, 862 residues long: Mismatch repair endonuclease PMS2 (862 aa).

5 residues coordinate ATP: asparagine 45, aspartate 70, glutamate 109, alanine 110, and leucine 111. 4 stretches are compositionally biased toward basic and acidic residues: residues 391 to 401 (DLEKPMVEKQD), 408 to 444 (TGEEKKDVSISRLREAFSLRHTTENKPHSPKTPEPRR), 484 to 495 (PTDRAEVEKDSG), and 528 to 552 (GSQEHVDSQEKAPKTDDSFSDVDCH). The tract at residues 391 to 552 (DLEKPMVEKQ…DDSFSDVDCH (162 aa)) is disordered. Threonine 573 is subject to Phosphothreonine. Residues 577–580 (KRFK) carry the Nuclear localization signal motif. Residue threonine 597 is modified to Phosphothreonine.

Belongs to the DNA mismatch repair MutL/HexB family. As to quaternary structure, heterodimer of PMS2 and MLH1 (MutL alpha); this interaction is required for the stability of both partners. Forms a ternary complex with MutS alpha (MSH2-MSH6) or MutS beta (MSH2-MSH3). Part of the BRCA1-associated genome surveillance complex (BASC), which contains BRCA1, MSH2, MSH6, MLH1, ATM, BLM, PMS2 and the RAD50-MRE11-NBS1 protein complex. This association could be a dynamic process changing throughout the cell cycle and within subnuclear domains. Interacts with MTMR15/FAN1.

Its subcellular location is the nucleus. It catalyses the reaction ATP + H2O = ADP + phosphate + H(+). Component of the post-replicative DNA mismatch repair system (MMR). Heterodimerizes with MLH1 to form MutL alpha. DNA repair is initiated by MutS alpha (MSH2-MSH6) or MutS beta (MSH2-MSH3) binding to a dsDNA mismatch, then MutL alpha is recruited to the heteroduplex. Assembly of the MutL-MutS-heteroduplex ternary complex in presence of RFC and PCNA is sufficient to activate endonuclease activity of PMS2. It introduces single-strand breaks near the mismatch and thus generates new entry points for the exonuclease EXO1 to degrade the strand containing the mismatch. DNA methylation would prevent cleavage and therefore assure that only the newly mutated DNA strand is going to be corrected. MutL alpha (MLH1-PMS2) interacts physically with the clamp loader subunits of DNA polymerase III, suggesting that it may play a role to recruit the DNA polymerase III to the site of the MMR. Also implicated in DNA damage signaling, a process which induces cell cycle arrest and can lead to apoptosis in case of major DNA damages. Possesses an ATPase activity, but in the absence of gross structural changes, ATP hydrolysis may not be necessary for proficient mismatch repair. The chain is Mismatch repair endonuclease PMS2 from Homo sapiens (Human).